Reading from the N-terminus, the 683-residue chain is DNA-directed RNA polymerase subunit beta' (683 aa).

Zn(2+)-binding residues include cysteine 69, cysteine 71, cysteine 87, and cysteine 90. 3 residues coordinate Mg(2+): aspartate 489, aspartate 491, and aspartate 493.

This sequence belongs to the RNA polymerase beta' chain family. RpoC1 subfamily. In terms of assembly, in plastids the minimal PEP RNA polymerase catalytic core is composed of four subunits: alpha, beta, beta', and beta''. When a (nuclear-encoded) sigma factor is associated with the core the holoenzyme is formed, which can initiate transcription. Requires Mg(2+) as cofactor. The cofactor is Zn(2+).

It localises to the plastid. The protein resides in the chloroplast. It catalyses the reaction RNA(n) + a ribonucleoside 5'-triphosphate = RNA(n+1) + diphosphate. Its function is as follows. DNA-dependent RNA polymerase catalyzes the transcription of DNA into RNA using the four ribonucleoside triphosphates as substrates. The sequence is that of DNA-directed RNA polymerase subunit beta' from Zea mays (Maize).